The sequence spans 353 residues: MTNHTITTAERELYLALIQRAQYRPIATQWLANLPQWLSDVKDKRRYAHAPAYLSAVENLPQIKVKNVDLNSDILTIDADLTDGQSKQITALMKQLMPWRKGPFQIGSGDNKVFIDTEWHSDWKWNRIKPHLGTLQGRYVLDVGGGSGYHGWRMAGAGAKQVVIIDPSCLFYHQFMAIRHFVAGFDTDMDSDRTGVGYRTHYIPVGLEQLPSSSDQGNQLFDTVFCMGVLYHRQSPFEHLIQLKNQLINGGQLVLETLVIEGDANTVLVPHNRYAKMNNVYFIPSVAALTGWLEKVGFSEVKCVDIDITSIKEQRATDWMSYQSLKDFLDPNDPTKTVEGYPAPMRATLIATK.

Residues Lys-101, Trp-119, Lys-124, Gly-144, 166–168 (DPS), 207–208 (LE), Met-227, Tyr-231, and Arg-346 each bind carboxy-S-adenosyl-L-methionine.

It belongs to the class I-like SAM-binding methyltransferase superfamily. CmoB family. Homotetramer.

The enzyme catalyses carboxy-S-adenosyl-L-methionine + 5-hydroxyuridine(34) in tRNA = 5-carboxymethoxyuridine(34) in tRNA + S-adenosyl-L-homocysteine + H(+). Functionally, catalyzes carboxymethyl transfer from carboxy-S-adenosyl-L-methionine (Cx-SAM) to 5-hydroxyuridine (ho5U) to form 5-carboxymethoxyuridine (cmo5U) at position 34 in tRNAs. In Psychrobacter sp. (strain PRwf-1), this protein is tRNA U34 carboxymethyltransferase.